Consider the following 427-residue polypeptide: UPF0761 membrane protein Plut_1323 (427 aa).

Transmembrane regions (helical) follow at residues 51-71, 105-125, 147-167, 188-208, 221-241, and 251-271; these read LLSI…FAVF, TFTM…VLIS, FTLY…SLAA, LLSL…YLLV, GALV…FYVA, and GALS…VVVL.

The protein belongs to the UPF0761 family.

The protein resides in the cell inner membrane. The protein is UPF0761 membrane protein Plut_1323 of Chlorobium luteolum (strain DSM 273 / BCRC 81028 / 2530) (Pelodictyon luteolum).